A 247-amino-acid polypeptide reads, in one-letter code: 3-oxoacyl-[acyl-carrier-protein] reductase MabA (247 aa).

NADP(+) is bound by residues 25 to 27 (RGI), arginine 47, 61 to 62 (DV), glycine 90, tyrosine 153, lysine 157, isoleucine 186, and arginine 197. The active-site Proton acceptor is tyrosine 153.

It belongs to the short-chain dehydrogenases/reductases (SDR) family. Homotetramer.

The protein resides in the secreted. It is found in the cell wall. The catalysed reaction is a (3R)-hydroxyacyl-[ACP] + NADP(+) = a 3-oxoacyl-[ACP] + NADPH + H(+). It functions in the pathway lipid metabolism; mycolic acid biosynthesis. Its function is as follows. Part of the mycobacterial fatty acid elongation system FAS-II, which is involved in mycolic acid biosynthesis. Catalyzes the NADPH-dependent reduction of beta-ketoacyl derivatives, the second step of the FAS-II elongation cycle. This is 3-oxoacyl-[acyl-carrier-protein] reductase MabA from Mycobacterium bovis (strain ATCC BAA-935 / AF2122/97).